A 248-amino-acid chain; its full sequence is Trypsin II-P29 (248 aa).

The first 16 residues, 1 to 16, serve as a signal peptide directing secretion; it reads MKFLFLILSCLGAAVA. The propeptide at 17 to 25 is activation peptide; it reads FPGGADDDK. One can recognise a Peptidase S1 domain in the interval 26–246; it reads IVGGYTCPEH…YVDWIQETIA (221 aa). 6 disulfides stabilise this stretch: Cys-32-Cys-162, Cys-50-Cys-66, Cys-134-Cys-235, Cys-141-Cys-208, Cys-173-Cys-187, and Cys-198-Cys-222. His-65 serves as the catalytic Charge relay system. Positions 77, 79, 82, and 87 each coordinate Ca(2+). The active-site Charge relay system is the Asp-109. Ser-202 acts as the Charge relay system in catalysis.

This sequence belongs to the peptidase S1 family. Requires Ca(2+) as cofactor. As to expression, high levels are seen in the pancreas while lower levels are found in the liver, spleen and thymus.

Its subcellular location is the secreted. It localises to the extracellular space. It carries out the reaction Preferential cleavage: Arg-|-Xaa, Lys-|-Xaa.. This Gallus gallus (Chicken) protein is Trypsin II-P29.